The primary structure comprises 195 residues: Imidazoleglycerol-phosphate dehydratase (195 aa).

The protein belongs to the imidazoleglycerol-phosphate dehydratase family.

The protein localises to the cytoplasm. The enzyme catalyses D-erythro-1-(imidazol-4-yl)glycerol 3-phosphate = 3-(imidazol-4-yl)-2-oxopropyl phosphate + H2O. It functions in the pathway amino-acid biosynthesis; L-histidine biosynthesis; L-histidine from 5-phospho-alpha-D-ribose 1-diphosphate: step 6/9. In Deinococcus radiodurans (strain ATCC 13939 / DSM 20539 / JCM 16871 / CCUG 27074 / LMG 4051 / NBRC 15346 / NCIMB 9279 / VKM B-1422 / R1), this protein is Imidazoleglycerol-phosphate dehydratase.